We begin with the raw amino-acid sequence, 274 residues long: Guanylyl cyclase 1 (274 aa).

In terms of assembly, functions both as monomer and homooligomer. Requires Mg(2+) as cofactor.

The enzyme catalyses GTP = 3',5'-cyclic GMP + diphosphate. It participates in nucleotide metabolism. Its function is as follows. Magnesium-dependent guanylyl cyclase that catalyzes the formation of guanosine 3',5'-cyclic monophosphate (cGMP) from guanosine 5'-triphosphate (GTP). Can also use ATP as substrate with a low activity. This chain is Guanylyl cyclase 1, found in Arabidopsis thaliana (Mouse-ear cress).